The primary structure comprises 190 residues: Large ribosomal subunit protein bL9 (190 aa).

The protein belongs to the bacterial ribosomal protein bL9 family.

Binds to the 23S rRNA. The polypeptide is Large ribosomal subunit protein bL9 (Rhodobacter capsulatus (strain ATCC BAA-309 / NBRC 16581 / SB1003)).